The primary structure comprises 389 residues: S-adenosylmethionine synthase (389 aa).

H19 contributes to the ATP binding site. D21 is a Mg(2+) binding site. E47 serves as a coordination point for K(+). Positions 60 and 103 each coordinate L-methionine. Positions 103 to 113 are flexible loop; sequence QSGDIAQGVDR. ATP is bound by residues 168-170, 234-235, D243, 249-250, A266, and K270; these read DGK, RF, and RK. D243 lines the L-methionine pocket. Position 274 (K274) interacts with L-methionine.

The protein belongs to the AdoMet synthase family. Homotetramer; dimer of dimers. Requires Mg(2+) as cofactor. K(+) is required as a cofactor.

The protein localises to the cytoplasm. It carries out the reaction L-methionine + ATP + H2O = S-adenosyl-L-methionine + phosphate + diphosphate. It participates in amino-acid biosynthesis; S-adenosyl-L-methionine biosynthesis; S-adenosyl-L-methionine from L-methionine: step 1/1. Functionally, catalyzes the formation of S-adenosylmethionine (AdoMet) from methionine and ATP. The overall synthetic reaction is composed of two sequential steps, AdoMet formation and the subsequent tripolyphosphate hydrolysis which occurs prior to release of AdoMet from the enzyme. The chain is S-adenosylmethionine synthase from Nitratidesulfovibrio vulgaris (strain DSM 19637 / Miyazaki F) (Desulfovibrio vulgaris).